Reading from the N-terminus, the 94-residue chain is Antifungal protein (94 aa).

The first 21 residues, 1–21 (MKFVSLASLGFALVAALGAVA), serve as a signal peptide directing secretion. Positions 22–43 (TPVEADSLTAGGLDARDESAVL) are excised as a propeptide. Cystine bridges form between Cys-50/Cys-76, Cys-57/Cys-83, Cys-69/Cys-71, and Cys-92/Cys-94.

The protein belongs to the antifungal protein pafB family.

Its subcellular location is the secreted. The protein localises to the host cytoplasm. In terms of biological role, antifungal protein that acts as an inhibitor of growth of a variety of fungal species. The protein is Antifungal protein (afp) of Aspergillus giganteus.